The chain runs to 594 residues: Adenine deaminase 1 (594 aa).

Belongs to the metallo-dependent hydrolases superfamily. Adenine deaminase family. Mn(2+) is required as a cofactor.

It carries out the reaction adenine + H2O + H(+) = hypoxanthine + NH4(+). The chain is Adenine deaminase 1 from Latilactobacillus sakei subsp. sakei (strain 23K) (Lactobacillus sakei subsp. sakei).